The sequence spans 129 residues: Translation initiation factor 5A (129 aa).

Residue lysine 36 is modified to Hypusine.

This sequence belongs to the eIF-5A family.

The protein localises to the cytoplasm. Functionally, functions by promoting the formation of the first peptide bond. The polypeptide is Translation initiation factor 5A (eif5a) (Thermoplasma acidophilum (strain ATCC 25905 / DSM 1728 / JCM 9062 / NBRC 15155 / AMRC-C165)).